A 253-amino-acid chain; its full sequence is 5-oxoprolinase subunit A (253 aa).

It belongs to the LamB/PxpA family. In terms of assembly, forms a complex composed of PxpA, PxpB and PxpC.

It carries out the reaction 5-oxo-L-proline + ATP + 2 H2O = L-glutamate + ADP + phosphate + H(+). Its function is as follows. Catalyzes the cleavage of 5-oxoproline to form L-glutamate coupled to the hydrolysis of ATP to ADP and inorganic phosphate. The polypeptide is 5-oxoprolinase subunit A (Azorhizobium caulinodans (strain ATCC 43989 / DSM 5975 / JCM 20966 / LMG 6465 / NBRC 14845 / NCIMB 13405 / ORS 571)).